The sequence spans 243 residues: Alanyl-tRNA editing protein AlaX-M (243 aa).

The Zn(2+) site is built by His105, His109, Cys208, and His212.

It belongs to the class-II aminoacyl-tRNA synthetase family. Editing domain AlaX-M subfamily. Zn(2+) serves as cofactor.

It localises to the cytoplasm. Functionally, functions in trans to edit the amino acid moiety from incorrectly charged Ser-tRNA(Ala) or Gly-tRNA(Ala). Has no activity on incorrectly charged Ser-tRNA(Thr), nor on correctly charged Ala-tRNA(Ala) or Ser-tRNA(Ser). The chain is Alanyl-tRNA editing protein AlaX-M (alaXM) from Methanosarcina barkeri (strain Fusaro / DSM 804).